The sequence spans 622 residues: MSRSSIPASRRVSRAKAQAFMDSLTGSSYFPNSRRIYLQGKTPSVHVPMREIKLHPTLIGKNGEHYEDNQPIPVYDTSGPYGDPTIAINVRTGLNRLREIWILARQDSEPISNNNNDRQSSDKQLSFTTNYNPRRASYGRCITQLHYARAGIITPEMEFIALRENMGRERISSNVLHQQHLGSNFGAKKADHITAEFVRQEVAAGRAIIPSNINHPESEPMIIGRNFLVKVNANIGNSAVTSSIEEEVEKLVWATRWGADTVMDLSTGSYIHETREWILRNSPVPIGTVPIYQALEKVNGVIENLNWDIFYETLLEQANQGVDYFTIHAGVLKRYVLLTASRLTGIVSRGGSIMAQWSLVHNQENFLYEHFSEICKLCAAYDIALSLGDGLRPGSVQDANDEAQFSELHTLGELTKIAWEYDVQVMIEGPGHIPLHMIERNMTDQLKYCHEAPFYTLGPLTTDIAPGYDHFTSGIGAALIGWFGCAMLCYVTPKEHLGLPNKEDVKQGLIAYKIAAHAADLAKGHPGAQIRDNAMSKARFEFRWEDQFNLALDPFTARMYHDETIPQTAGKLANFCSMCGPKFCSMKLSKKIRNYTNMKNIKTISNSFMNKLDNSGIKNADR.

The tract at residues 109 to 130 (EPISNNNNDRQSSDKQLSFTTN) is disordered. Residues asparagine 234, methionine 263, tyrosine 292, histidine 328, 348–350 (SRG), 389–392 (DGLR), and glutamate 428 contribute to the substrate site. Histidine 432 contributes to the Zn(2+) binding site. Tyrosine 455 contacts substrate. Residue histidine 496 participates in Zn(2+) binding. 3 residues coordinate [4Fe-4S] cluster: cysteine 576, cysteine 579, and cysteine 584.

It belongs to the ThiC family. As to quaternary structure, homodimer. [4Fe-4S] cluster is required as a cofactor.

The catalysed reaction is 5-amino-1-(5-phospho-beta-D-ribosyl)imidazole + S-adenosyl-L-methionine = 4-amino-2-methyl-5-(phosphooxymethyl)pyrimidine + CO + 5'-deoxyadenosine + formate + L-methionine + 3 H(+). It functions in the pathway cofactor biosynthesis; thiamine diphosphate biosynthesis. Its function is as follows. Catalyzes the synthesis of the hydroxymethylpyrimidine phosphate (HMP-P) moiety of thiamine from aminoimidazole ribotide (AIR) in a radical S-adenosyl-L-methionine (SAM)-dependent reaction. This chain is Phosphomethylpyrimidine synthase, found in Baumannia cicadellinicola subsp. Homalodisca coagulata.